A 76-amino-acid polypeptide reads, in one-letter code: Toxin Acra III-1 (76 aa).

Residues 4 to 67 form the LCN-type CS-alpha/beta domain; it reads PGNYPLDTRG…IWDAVKNHCT (64 aa). 3 cysteine pairs are disulfide-bonded: Cys-18-Cys-41, Cys-27-Cys-46, and Cys-31-Cys-48.

Belongs to the long (3 C-C) scorpion toxin superfamily. Sodium channel inhibitor family. Beta subfamily. In terms of tissue distribution, expressed by the venom gland.

Its subcellular location is the secreted. Functionally, binds to sodium channels (Nav) and affects the channel activation process. This Androctonus crassicauda (Arabian fat-tailed scorpion) protein is Toxin Acra III-1.